We begin with the raw amino-acid sequence, 251 residues long: Ubiquinone/menaquinone biosynthesis C-methyltransferase UbiE (251 aa).

S-adenosyl-L-methionine is bound by residues Thr74, Asp95, 123–124 (NA), and Ser140.

The protein belongs to the class I-like SAM-binding methyltransferase superfamily. MenG/UbiE family.

The enzyme catalyses a 2-demethylmenaquinol + S-adenosyl-L-methionine = a menaquinol + S-adenosyl-L-homocysteine + H(+). It catalyses the reaction a 2-methoxy-6-(all-trans-polyprenyl)benzene-1,4-diol + S-adenosyl-L-methionine = a 5-methoxy-2-methyl-3-(all-trans-polyprenyl)benzene-1,4-diol + S-adenosyl-L-homocysteine + H(+). It functions in the pathway quinol/quinone metabolism; menaquinone biosynthesis; menaquinol from 1,4-dihydroxy-2-naphthoate: step 2/2. Its pathway is cofactor biosynthesis; ubiquinone biosynthesis. Methyltransferase required for the conversion of demethylmenaquinol (DMKH2) to menaquinol (MKH2) and the conversion of 2-polyprenyl-6-methoxy-1,4-benzoquinol (DDMQH2) to 2-polyprenyl-3-methyl-6-methoxy-1,4-benzoquinol (DMQH2). This Yersinia pestis bv. Antiqua (strain Antiqua) protein is Ubiquinone/menaquinone biosynthesis C-methyltransferase UbiE.